We begin with the raw amino-acid sequence, 72 residues long: SRY-related protein MG43 (72 aa).

A DNA-binding region (HMG box) is located at residues 1-69 (VKRPMNAFMV…KHMADYPDYK (69 aa)).

The protein localises to the nucleus. This Tarentola mauritanica (Common wall gecko) protein is SRY-related protein MG43.